The sequence spans 432 residues: MRVVYLVLVVAVIIAITEAKSVKKSKTRSPKHPRHRTLADDYKLNRISAKYCKDYDDSCKAFGKIAKKDKKSCFNNPDKARMACPVSCKLCDKKTFHKKSKLSDVVVVRAMCVDIEVDQCNPDVCYTNPDWATENCRKTCMLCKPDIRGPCDTDPRCPFWGQYGYCSTATYIDNHCPYNCDVYSYVPEAPQPYPLPIEPLYAYQPLPYPTAPPGVTPATLPPYYENAPQPTYAPGAQYPAATAAPAPSAPGATAAPAPSAPGATAAPAPSAPEATAAPAPSAPEATAAPAPSAPEATAAPAPAPEAAPSEPEAAPAPAPEMAPAPAPEMAPAPEAASAPAPEAAPAPEAASAPAPEAAPAPEAASAPAPEAASAPAPEAAPAPEAASAPAPEAAPAPEAAPSEQPMPGKKSKSKPSKRKGVKKSKSGHKRHH.

An N-terminal signal peptide occupies residues 1-19; it reads MRVVYLVLVVAVIIAITEA. 6 disulfides stabilise this stretch: Cys-52-Cys-91, Cys-59-Cys-84, Cys-73-Cys-88, Cys-125-Cys-140, Cys-157-Cys-176, and Cys-166-Cys-180. ShKT domains follow at residues 59-91, 107-143, and 149-183; these read CKAF…CKLC, VVRA…CMLC, and GPCD…CDVY. The span at 235–313 shows a compositional bias: low complexity; that stretch reads GAQYPAATAA…PEAAPSEPEA (79 aa). Residues 235–432 are disordered; that stretch reads GAQYPAATAA…KSKSGHKRHH (198 aa). Over residues 314 to 330 the composition is skewed to pro residues; it reads APAPAPEMAPAPAPEMA. Low complexity predominate over residues 331-408; the sequence is PAPEAASAPA…AAPSEQPMPG (78 aa). A compositionally biased stretch (basic residues) spans 409–432; it reads KKSKSKPSKRKGVKKSKSGHKRHH.

The protein belongs to the NEP3 family. As to expression, nematocytes. In late planulae, transcripts are found throughout the ectoderm in nematocytes, with high concentration of expressing cells in the oral pole. In primary polyps, is expressed in nematocytes in the body wall and physa ectoderm and in the upper and lower pharynx.

The protein resides in the nematocyst. It is found in the secreted. In terms of biological role, probable toxin. The chain is Nematocyst expressed protein 3-like from Nematostella vectensis (Starlet sea anemone).